Reading from the N-terminus, the 159-residue chain is Putative pre-16S rRNA nuclease (159 aa).

The protein belongs to the YqgF nuclease family.

The protein resides in the cytoplasm. Functionally, could be a nuclease involved in processing of the 5'-end of pre-16S rRNA. This is Putative pre-16S rRNA nuclease from Agrobacterium fabrum (strain C58 / ATCC 33970) (Agrobacterium tumefaciens (strain C58)).